Consider the following 77-residue polypeptide: Defensin-B6 (77 aa).

The signal sequence occupies residues 1-20; the sequence is MKTLFFLSVFIFLLLHLSPG. Cystine bridges form between C43–C70, C50–C64, and C54–C71.

This sequence belongs to the beta-defensin family. Lowly expressed in spleen, kidney and lung.

It is found in the secreted. Its function is as follows. Has antimicrobial activity. This chain is Defensin-B6, found in Ornithorhynchus anatinus (Duckbill platypus).